The sequence spans 156 residues: Ribosome maturation factor RimP (156 aa).

The protein belongs to the RimP family.

Its subcellular location is the cytoplasm. Its function is as follows. Required for maturation of 30S ribosomal subunits. This Dictyoglomus turgidum (strain DSM 6724 / Z-1310) protein is Ribosome maturation factor RimP.